A 428-amino-acid polypeptide reads, in one-letter code: Enolase (428 aa).

Position 163 (Q163) interacts with (2R)-2-phosphoglycerate. Residue E205 is the Proton donor of the active site. Positions 242, 286, and 313 each coordinate Mg(2+). (2R)-2-phosphoglycerate is bound by residues K338, R367, S368, and K389. The active-site Proton acceptor is K338.

This sequence belongs to the enolase family. Requires Mg(2+) as cofactor.

Its subcellular location is the cytoplasm. The protein resides in the secreted. The protein localises to the cell surface. The catalysed reaction is (2R)-2-phosphoglycerate = phosphoenolpyruvate + H2O. It functions in the pathway carbohydrate degradation; glycolysis; pyruvate from D-glyceraldehyde 3-phosphate: step 4/5. In terms of biological role, catalyzes the reversible conversion of 2-phosphoglycerate (2-PG) into phosphoenolpyruvate (PEP). It is essential for the degradation of carbohydrates via glycolysis. In Lactobacillus acidophilus (strain ATCC 700396 / NCK56 / N2 / NCFM), this protein is Enolase.